Consider the following 201-residue polypeptide: Protein OPI10 homolog (201 aa).

The protein belongs to the OPI10 family.

This chain is Protein OPI10 homolog, found in Anopheles gambiae (African malaria mosquito).